The chain runs to 308 residues: Uricase-2 (308 aa).

Catalysis depends on charge relay system residues lysine 17 and threonine 63. Residues threonine 63, aspartate 64, phenylalanine 165, arginine 182, valine 237, glutamine 238, and asparagine 264 each contribute to the urate site. Histidine 266 functions as the Charge relay system in the catalytic mechanism. A Microbody targeting signal motif is present at residues 306-308; sequence SKL.

The protein belongs to the uricase family. In terms of assembly, homotetramer. As to expression, expressed predominantly in the uninfected cells of the central tissue of the root nodule. Also expressed in the nodule parenchyma cells and vascular tissue, in the roots, stems and leaves of uninfected adult plants, and in the cotyledons, roots and hypocotyls of developing seedlings. Localized to the metaxylem parenchyma cells and phloem fibers of developing roots.

It is found in the peroxisome. It catalyses the reaction urate + O2 + H2O = 5-hydroxyisourate + H2O2. The protein operates within purine metabolism; urate degradation; (S)-allantoin from urate: step 1/3. Its function is as follows. Catalyzes the oxidation of uric acid to 5-hydroxyisourate, which is further processed to form (S)-allantoin. The protein is Uricase-2 (URIII) of Phaseolus vulgaris (Kidney bean).